A 137-amino-acid polypeptide reads, in one-letter code: Small ribosomal subunit protein uS9 (137 aa).

Positions 104-137 are disordered; sequence PLKSEGYLTRDPRAKERKKYGLHKARKAPQYSKR. A compositionally biased stretch (basic residues) spans 118–137; sequence KERKKYGLHKARKAPQYSKR.

It belongs to the universal ribosomal protein uS9 family.

This chain is Small ribosomal subunit protein uS9, found in Gloeothece citriformis (strain PCC 7424) (Cyanothece sp. (strain PCC 7424)).